Reading from the N-terminus, the 830-residue chain is Phenylalanine--tRNA ligase beta subunit (830 aa).

A tRNA-binding domain is found at G39–P158. The 76-residue stretch at P417 to E492 folds into the B5 domain. Mg(2+) contacts are provided by D470, D476, E479, and E480. The segment at I490–T510 is disordered. The region spanning S736–R828 is the FDX-ACB domain.

It belongs to the phenylalanyl-tRNA synthetase beta subunit family. Type 1 subfamily. In terms of assembly, tetramer of two alpha and two beta subunits. Mg(2+) serves as cofactor.

It localises to the cytoplasm. The enzyme catalyses tRNA(Phe) + L-phenylalanine + ATP = L-phenylalanyl-tRNA(Phe) + AMP + diphosphate + H(+). This Salinibacter ruber (strain DSM 13855 / M31) protein is Phenylalanine--tRNA ligase beta subunit.